Reading from the N-terminus, the 327-residue chain is Lipoyl synthase (327 aa).

Residues Cys-72, Cys-77, Cys-83, Cys-98, Cys-102, Cys-105, and Ser-313 each coordinate [4Fe-4S] cluster. The 220-residue stretch at 83 to 302 (CWSHGTATIM…RKVGLEKGFL (220 aa)) folds into the Radical SAM core domain.

The protein belongs to the radical SAM superfamily. Lipoyl synthase family. It depends on [4Fe-4S] cluster as a cofactor.

The protein resides in the cytoplasm. The catalysed reaction is [[Fe-S] cluster scaffold protein carrying a second [4Fe-4S](2+) cluster] + N(6)-octanoyl-L-lysyl-[protein] + 2 oxidized [2Fe-2S]-[ferredoxin] + 2 S-adenosyl-L-methionine + 4 H(+) = [[Fe-S] cluster scaffold protein] + N(6)-[(R)-dihydrolipoyl]-L-lysyl-[protein] + 4 Fe(3+) + 2 hydrogen sulfide + 2 5'-deoxyadenosine + 2 L-methionine + 2 reduced [2Fe-2S]-[ferredoxin]. The protein operates within protein modification; protein lipoylation via endogenous pathway; protein N(6)-(lipoyl)lysine from octanoyl-[acyl-carrier-protein]: step 2/2. Its function is as follows. Catalyzes the radical-mediated insertion of two sulfur atoms into the C-6 and C-8 positions of the octanoyl moiety bound to the lipoyl domains of lipoate-dependent enzymes, thereby converting the octanoylated domains into lipoylated derivatives. This Francisella tularensis subsp. holarctica (strain FTNF002-00 / FTA) protein is Lipoyl synthase.